An 89-amino-acid chain; its full sequence is Small ribosomal subunit protein bS20 (89 aa).

Belongs to the bacterial ribosomal protein bS20 family.

In terms of biological role, binds directly to 16S ribosomal RNA. The chain is Small ribosomal subunit protein bS20 from Wolbachia sp. subsp. Drosophila simulans (strain wRi).